Here is a 215-residue protein sequence, read N- to C-terminus: Oligoribonuclease (215 aa).

An Exonuclease domain is found at 5-170 (LVWIDCEMTG…ADIHESIREL (166 aa)). Residue Y127 is part of the active site.

The protein belongs to the oligoribonuclease family.

It localises to the cytoplasm. In terms of biological role, 3'-to-5' exoribonuclease specific for small oligoribonucleotides. The protein is Oligoribonuclease of Mycobacterium leprae (strain TN).